Consider the following 454-residue polypeptide: CBL-interacting protein kinase 33 (454 aa).

In terms of domain architecture, Protein kinase spans 13–268 (YELGRTIGEG…IPEILEDEWF (256 aa)). Residues 19-27 (IGEGTFAKV) and lysine 42 contribute to the ATP site. Residue aspartate 136 is the Proton acceptor of the active site. The interval 154-183 (DFGLSALSQQIKDDGLLHTTCGTPNYVAPE) is activation loop. The NAF domain maps to 305–329 (EEPEALNAFELISMSAGLNLGNLFD). Positions 335–364 (KRETRFTSKCPPKEIVRKIEEAAKPLGFDV) are PPI.

It belongs to the protein kinase superfamily. CAMK Ser/Thr protein kinase family. SNF1 subfamily. Mn(2+) is required as a cofactor.

It carries out the reaction L-seryl-[protein] + ATP = O-phospho-L-seryl-[protein] + ADP + H(+). The catalysed reaction is L-threonyl-[protein] + ATP = O-phospho-L-threonyl-[protein] + ADP + H(+). CIPK serine-threonine protein kinases interact with CBL proteins. Binding of a CBL protein to the regulatory NAF domain of CIPK protein lead to the activation of the kinase in a calcium-dependent manner. In Oryza sativa subsp. japonica (Rice), this protein is CBL-interacting protein kinase 33 (CIPK33).